A 142-amino-acid chain; its full sequence is Relaxin-3 (142 aa).

A signal peptide spans 1 to 25 (MARYMLLLLLAVWVLTGELWPGAEA). Intrachain disulfides connect Cys35–Cys129, Cys47–Cys142, and Cys128–Cys133. Residues 55–118 (SDILAHEAMG…GTPGVLRGSR (64 aa)) constitute a propeptide, connecting peptide.

Belongs to the insulin family. Heterodimer of a B chain and an A chain linked by two disulfide bonds.

Its subcellular location is the secreted. Functionally, may play a role in neuropeptide signaling processes. Ligand for LGR7, RXFP3 and RXFP4. This is Relaxin-3 (RLN3) from Homo sapiens (Human).